The sequence spans 352 residues: Methylthioribose-1-phosphate isomerase (352 aa).

Residues 55-57, Arg-98, and Gln-201 contribute to the substrate site; that span reads RGA. Residue Asp-242 is the Proton donor of the active site. 252-253 lines the substrate pocket; that stretch reads NK.

The protein belongs to the eIF-2B alpha/beta/delta subunits family. MtnA subfamily.

It carries out the reaction 5-(methylsulfanyl)-alpha-D-ribose 1-phosphate = 5-(methylsulfanyl)-D-ribulose 1-phosphate. It participates in amino-acid biosynthesis; L-methionine biosynthesis via salvage pathway; L-methionine from S-methyl-5-thio-alpha-D-ribose 1-phosphate: step 1/6. Its function is as follows. Catalyzes the interconversion of methylthioribose-1-phosphate (MTR-1-P) into methylthioribulose-1-phosphate (MTRu-1-P). This chain is Methylthioribose-1-phosphate isomerase, found in Methylococcus capsulatus (strain ATCC 33009 / NCIMB 11132 / Bath).